We begin with the raw amino-acid sequence, 442 residues long: Urokinase-type plasminogen activator (442 aa).

Positions 1–20 (MRVLRACLSLCVLVVSDSKG) are cleaved as a signal peptide. The EGF-like domain occupies 29 to 65 (GASNCGCLNGGKCVSYKYFSNIQRCSCPKKFQGEHCE). Disulfide bonds link C33-C41, C35-C53, C55-C64, C72-C153, C93-C135, C124-C148, C179-C310, C220-C236, C228-C299, C324-C393, C356-C372, and C383-C411. The binds urokinase plasminogen activator surface receptor stretch occupies residues 36–59 (LNGGKCVSYKYFSNIQRCSCPKKF). One can recognise a Kringle domain in the interval 72–153 (CFEGNGHSYR…LVQECMVPNC (82 aa)). N-linked (GlcNAc...) asparagine glycosylation is present at N152. Residues 154–189 (SGGESHRPAYDGKNPFSTPEKVEFQCGQKALRPRFK) are connecting peptide. One can recognise a Peptidase S1 domain in the interval 190-435 (IVGGKSTTIE…FLTWIHTHVG (246 aa)). Catalysis depends on charge relay system residues H235 and D286. S387 functions as the Charge relay system in the catalytic mechanism.

Belongs to the peptidase S1 family. Found in high and low molecular mass forms. Each consists of two chains, A and B. The high molecular mass form contains a long chain A which is cleaved to yield a short chain A. Forms heterodimer with SERPINA5. Binds LRP1B; binding is followed by internalization and degradation. Interacts with MRC2. Interacts with PLAUR. In complex with SERPINE1, interacts with PLAUR/uPAR. Interacts with SORL1 and LRP1, either alone or in complex with SERPINE1; these interactions are abolished in the presence of LRPAP1/RAP. The ternary complex composed of PLAUR-PLAU-PAI1 also interacts with SORLA. In terms of processing, produced as an inactive single-chain protein (pro-uPA or sc-uPA), is processed into the active disulfide-linked two-chain form of PLAU/uPA by a proteolytic event mediated, at least, by TMPRSS4.

It is found in the secreted. The enzyme catalyses Specific cleavage of Arg-|-Val bond in plasminogen to form plasmin.. Inhibited by SERPINA5. Inhibited by SERPINE1. Specifically cleaves the zymogen plasminogen to form the active enzyme plasmin. In Sus scrofa (Pig), this protein is Urokinase-type plasminogen activator (PLAU).